The following is a 778-amino-acid chain: Endonuclease MutS2 (778 aa).

328-335 is an ATP binding site; sequence GPNTGGKT. Residues 702–777 enclose the Smr domain; it reads LDLRGKRYEE…GSGATIVTFK (76 aa).

It belongs to the DNA mismatch repair MutS family. MutS2 subfamily. In terms of assembly, homodimer. Binds to stalled ribosomes, contacting rRNA.

In terms of biological role, endonuclease that is involved in the suppression of homologous recombination and thus may have a key role in the control of bacterial genetic diversity. Functionally, acts as a ribosome collision sensor, splitting the ribosome into its 2 subunits. Detects stalled/collided 70S ribosomes which it binds and splits by an ATP-hydrolysis driven conformational change. Acts upstream of the ribosome quality control system (RQC), a ribosome-associated complex that mediates the extraction of incompletely synthesized nascent chains from stalled ribosomes and their subsequent degradation. Probably generates substrates for RQC. The polypeptide is Endonuclease MutS2 (Streptococcus pneumoniae serotype 19F (strain G54)).